The following is a 492-amino-acid chain: N-succinylglutamate 5-semialdehyde dehydrogenase (492 aa).

220–225 (GSASTG) contributes to the NAD(+) binding site. Residues Glu-243 and Cys-277 contribute to the active site.

It belongs to the aldehyde dehydrogenase family. AstD subfamily.

It catalyses the reaction N-succinyl-L-glutamate 5-semialdehyde + NAD(+) + H2O = N-succinyl-L-glutamate + NADH + 2 H(+). Its pathway is amino-acid degradation; L-arginine degradation via AST pathway; L-glutamate and succinate from L-arginine: step 4/5. Its function is as follows. Catalyzes the NAD-dependent reduction of succinylglutamate semialdehyde into succinylglutamate. The polypeptide is N-succinylglutamate 5-semialdehyde dehydrogenase (Salmonella heidelberg (strain SL476)).